The chain runs to 160 residues: Cytochrome b6-f complex subunit 4 (160 aa).

The next 3 helical transmembrane spans lie at 36 to 56, 95 to 115, and 127 to 147; these read LLYTFPVVILGTITCCIGLAL, LLGVLSMASVPLGLIFVPFIE, and PIATTVFLVGTVVTIWLGIGA.

The protein belongs to the cytochrome b family. PetD subfamily. As to quaternary structure, the 4 large subunits of the cytochrome b6-f complex are cytochrome b6, subunit IV (17 kDa polypeptide, petD), cytochrome f and the Rieske protein, while the 4 small subunits are petG, petL, petM and petN. The complex functions as a dimer.

The protein localises to the plastid. Its subcellular location is the chloroplast thylakoid membrane. Component of the cytochrome b6-f complex, which mediates electron transfer between photosystem II (PSII) and photosystem I (PSI), cyclic electron flow around PSI, and state transitions. This Cyanidioschyzon merolae (strain NIES-3377 / 10D) (Unicellular red alga) protein is Cytochrome b6-f complex subunit 4.